The sequence spans 924 residues: MYQYAPSHNLDHIEWNHAHLIYPPNLAIPTSPVNPPATQLNQPVQMTIDFDSIIEPKLGARESISWNRNGIIASIGDEGVETNLLVCTDGQDWVLTKPTLYAPKSILQPPTTSFVTPHRAFCHVEWSPSGSDLAIIDTLGSLYIYSQYTTLSPITCLRKPPSEELTTPIDLNAIVGFTWVAPEKPVILTNPGLKAGGNEKSKQKLSDVKDFPTGQTSQLLGYSGISVTYGVSQGLHLGPRIPQGFGACIGVTRSQVLKLWTQNGPSQPYNLVKLSLNQLHSDDIISHASFAGTKDHKMLLACYSPAGAIYLYRIEVEWSKEEEPKLRATRLLKETLMPQSGAPARLTDLKLFSIRSNQVSSETEAEMVCVFTDTKGATTNRYELQSHTPDLNSTFYSLGTNDSSASSTTTHKTHIISLVETTTSNKIVNIGSQVYDSIFFAAHEDGILNFRYRGNVSSSTKGTPFNMFSDAGYAFTPLPKGSDRPDYICVSPTCASYVYKTKDGLKLRIIDNKIPDADLTVAQMVDSAFVLSLRHSVSCISAVCNDDVMMVMRREIQRVSKLAPALETQFPLLLLAESHKAINFSLDLKKDHQMDKIMINPSLQRLLTMQTVIGTQHGWTRNVTSRLSWCFLNLRLVSFSLTFTLRAIGQQKPGVAPNHAMRIHYLMSLSGLKRWCLDFAAYLCQELLAASNEGPSYFQKQHVALPMVMARSSRMLLMYSWRGIRSLDTILMQKPGTETQEAGLASQRQRELSHFTPISMTFFEQLFNVIDSHTKQVAENVEDRLGLEQQLLFQGMIPQQFLPLAKRCVDEFDKFRKTNDLSPLYFYNVSWLGLDEHYDGRPAPTPAMAPYRNVTSTGLKIDCLRKFIIERQEGSILRVCQRCAGTSVFVDSSDGKQFTGTHWTFAFQRNCWCGGMWIPESLGV.

Belongs to the Mediator complex subunit 16 family. In terms of assembly, component of the Mediator complex.

The protein localises to the nucleus. Component of the Mediator complex, a coactivator involved in the regulated transcription of nearly all RNA polymerase II-dependent genes. Mediator functions as a bridge to convey information from gene-specific regulatory proteins to the basal RNA polymerase II transcription machinery. Mediator is recruited to promoters by direct interactions with regulatory proteins and serves as a scaffold for the assembly of a functional preinitiation complex with RNA polymerase II and the general transcription factors. This chain is Mediator of RNA polymerase II transcription subunit 16 (SIN4), found in Yarrowia lipolytica (strain CLIB 122 / E 150) (Yeast).